A 489-amino-acid chain; its full sequence is Cobyric acid synthase (489 aa).

In terms of domain architecture, GATase cobBQ-type spans 251–444 (GLIIAVIRLP…LHGIFANDTF (194 aa)). Residue C329 is the Nucleophile of the active site. H436 is an active-site residue.

This sequence belongs to the CobB/CobQ family. CobQ subfamily.

The protein operates within cofactor biosynthesis; adenosylcobalamin biosynthesis. Its function is as follows. Catalyzes amidations at positions B, D, E, and G on adenosylcobyrinic A,C-diamide. NH(2) groups are provided by glutamine, and one molecule of ATP is hydrogenolyzed for each amidation. The protein is Cobyric acid synthase of Chloroflexus aurantiacus (strain ATCC 29366 / DSM 635 / J-10-fl).